Here is a 120-residue protein sequence, read N- to C-terminus: uncharacterized protein (120 aa).

This sequence belongs to the asp23 family.

This is an uncharacterized protein from Bacillus subtilis (strain 168).